The following is a 180-amino-acid chain: Adenosine 5'-phosphosulfate reductase (180 aa).

Cysteine 57, cysteine 58, cysteine 140, and cysteine 143 together coordinate [4Fe-4S] cluster. The Nucleophile; cysteine thiosulfonate intermediate role is filled by cysteine 168.

This sequence belongs to the PAPS reductase family. CysH subfamily. [4Fe-4S] cluster is required as a cofactor.

Its subcellular location is the cytoplasm. The catalysed reaction is [thioredoxin]-disulfide + sulfite + AMP + 2 H(+) = adenosine 5'-phosphosulfate + [thioredoxin]-dithiol. Its pathway is sulfur metabolism; hydrogen sulfide biosynthesis; sulfite from sulfate. In terms of biological role, catalyzes the formation of sulfite from adenosine 5'-phosphosulfate (APS) using thioredoxin as an electron donor. The sequence is that of Adenosine 5'-phosphosulfate reductase from Rhizobium tropici.